A 196-amino-acid polypeptide reads, in one-letter code: Adenylate kinase (196 aa).

Residue 9–17 (GIPGVGKST) coordinates ATP.

It belongs to the archaeal adenylate kinase family.

It is found in the cytoplasm. The enzyme catalyses AMP + ATP = 2 ADP. This Pyrococcus abyssi (strain GE5 / Orsay) protein is Adenylate kinase (adkA).